The chain runs to 236 residues: uncharacterized protein (236 aa).

The signal sequence occupies residues 1–24; it reads MRKKHFNMILKLALISSLLALAAS. 3 N-linked (GlcNAc...) asparagine glycosylation sites follow: asparagine 59, asparagine 171, and asparagine 197.

The protein resides in the secreted. This is an uncharacterized protein from Caenorhabditis elegans.